Here is a 309-residue protein sequence, read N- to C-terminus: Porphobilinogen deaminase (309 aa).

Cys234 carries the post-translational modification S-(dipyrrolylmethanemethyl)cysteine.

It belongs to the HMBS family. Monomer. Dipyrromethane serves as cofactor.

The catalysed reaction is 4 porphobilinogen + H2O = hydroxymethylbilane + 4 NH4(+). It participates in porphyrin-containing compound metabolism; protoporphyrin-IX biosynthesis; coproporphyrinogen-III from 5-aminolevulinate: step 2/4. Functionally, tetrapolymerization of the monopyrrole PBG into the hydroxymethylbilane pre-uroporphyrinogen in several discrete steps. The chain is Porphobilinogen deaminase (hemC) from Mycobacterium bovis (strain ATCC BAA-935 / AF2122/97).